We begin with the raw amino-acid sequence, 119 residues long: Large ribosomal subunit protein uL18 (119 aa).

The segment covering 1 to 10 has biased composition (basic and acidic residues); the sequence is MKKIKEAEQR. Residues 1–20 are disordered; it reads MKKIKEAEQRKLRRKKRIKD.

This sequence belongs to the universal ribosomal protein uL18 family. Part of the 50S ribosomal subunit; part of the 5S rRNA/L5/L18/L25 subcomplex. Contacts the 5S and 23S rRNAs.

In terms of biological role, this is one of the proteins that bind and probably mediate the attachment of the 5S RNA into the large ribosomal subunit, where it forms part of the central protuberance. The sequence is that of Large ribosomal subunit protein uL18 from Borreliella burgdorferi (strain ATCC 35210 / DSM 4680 / CIP 102532 / B31) (Borrelia burgdorferi).